A 105-amino-acid polypeptide reads, in one-letter code: UPF0145 protein Aflv_1588 (105 aa).

The protein belongs to the UPF0145 family.

This chain is UPF0145 protein Aflv_1588, found in Anoxybacillus flavithermus (strain DSM 21510 / WK1).